The primary structure comprises 184 residues: ATP synthase subunit b, chloroplastic (184 aa).

Residues 27–49 (LATNPINLSVVFGVLIFFGKGVL) traverse the membrane as a helical segment.

Belongs to the ATPase B chain family. As to quaternary structure, F-type ATPases have 2 components, F(1) - the catalytic core - and F(0) - the membrane proton channel. F(1) has five subunits: alpha(3), beta(3), gamma(1), delta(1), epsilon(1). F(0) has four main subunits: a(1), b(1), b'(1) and c(10-14). The alpha and beta chains form an alternating ring which encloses part of the gamma chain. F(1) is attached to F(0) by a central stalk formed by the gamma and epsilon chains, while a peripheral stalk is formed by the delta, b and b' chains.

The protein localises to the plastid. The protein resides in the chloroplast thylakoid membrane. F(1)F(0) ATP synthase produces ATP from ADP in the presence of a proton or sodium gradient. F-type ATPases consist of two structural domains, F(1) containing the extramembraneous catalytic core and F(0) containing the membrane proton channel, linked together by a central stalk and a peripheral stalk. During catalysis, ATP synthesis in the catalytic domain of F(1) is coupled via a rotary mechanism of the central stalk subunits to proton translocation. Functionally, component of the F(0) channel, it forms part of the peripheral stalk, linking F(1) to F(0). This Nasturtium officinale (Watercress) protein is ATP synthase subunit b, chloroplastic.